Here is an 80-residue protein sequence, read N- to C-terminus: Exodeoxyribonuclease 7 small subunit (80 aa).

It belongs to the XseB family. In terms of assembly, heterooligomer composed of large and small subunits.

The protein resides in the cytoplasm. It catalyses the reaction Exonucleolytic cleavage in either 5'- to 3'- or 3'- to 5'-direction to yield nucleoside 5'-phosphates.. Functionally, bidirectionally degrades single-stranded DNA into large acid-insoluble oligonucleotides, which are then degraded further into small acid-soluble oligonucleotides. The chain is Exodeoxyribonuclease 7 small subunit from Pseudomonas paraeruginosa (strain DSM 24068 / PA7) (Pseudomonas aeruginosa (strain PA7)).